A 525-amino-acid chain; its full sequence is MSPKELAEAVNKRRTFAIISHPDAGKTTITEQLLLFGGVVREAGTVKARKTGNFAKSDWMEIEKKRGISVTSSVMQFDFQGKRINILDTPGHEDFSEDTYRTLMAVDSAVMVIDSAKGIEPQTKKLFQICKMRGIPIFTFMNKFDRDAREPLDLLNEVEDVLGIETYPINWPIGSGHQFKGIYDRFNHRVALTHPADENNPYLPLDEDGNVEGDNPLAGDGEWQDAMDGMELVEVAGNELDQEKIAKGDQTPVFFGSALTNFGVQTFLETYLQFAPAPSDHKTEDGDVVKPLDPEFSGFVFKIQANMNPRHRDRIAFVRICSGEFDRGMDVTLSRTKKPMRLSNVTEFMADTRENVETAVAGDIIGLYDTGNFQIGDSIYNGKKDIQFEKLPQFTPELFVRVSAKNVMKQKSFHKGINQLVQEGAVQLYRSYSTGDYILGAVGQLQFEVFKFRMQNEYNSEVVMEPMGTKTARWIDPDQLDEKMSSSRNILVKDIHDQPLFLFENQFAENWFKQKYPDVKLTAKL.

The tr-type G domain maps to asparagine 11–serine 279. GTP is bound by residues serine 20–threonine 27, aspartate 88–histidine 92, and asparagine 142–aspartate 145.

This sequence belongs to the TRAFAC class translation factor GTPase superfamily. Classic translation factor GTPase family. PrfC subfamily.

It is found in the cytoplasm. Increases the formation of ribosomal termination complexes and stimulates activities of RF-1 and RF-2. It binds guanine nucleotides and has strong preference for UGA stop codons. It may interact directly with the ribosome. The stimulation of RF-1 and RF-2 is significantly reduced by GTP and GDP, but not by GMP. The polypeptide is Peptide chain release factor 3 (Limosilactobacillus reuteri (strain DSM 20016) (Lactobacillus reuteri)).